The chain runs to 144 residues: Maximins 5/H4 type 3 (144 aa).

The N-terminal stretch at 1–18 is a signal peptide; it reads MNFKYIVAVSFLIASAYA. 2 propeptides span residues 19 to 43 and 74 to 123; these read RSVQ…REIR and TAED…KEKR. Leu143 carries the leucine amide modification.

The protein belongs to the bombinin family. Expressed by the skin glands.

It localises to the secreted. Functionally, maximin-5 shows antibacterial activity against both Gram-positive and Gram-negative bacteria. The only exception is the resistance of E.coli. Also shows antimicrobial activity against fungi C.albicans, A.flavus and P.uticale. It has little hemolytic activity. It does not possess a significant cytotoxicity against tumor cell lines. It does not possess a significant anti-HIV activity. In terms of biological role, maximin-H4 shows antibacterial activity against both Gram-positive and Gram-negative bacteria. It also shows antimicrobial activity against the fungus C.albicans. Shows strong hemolytic activity. This Bombina maxima (Giant fire-bellied toad) protein is Maximins 5/H4 type 3.